The following is a 284-amino-acid chain: 4-hydroxy-3-methylbut-2-enyl diphosphate reductase (284 aa).

Cys12 contributes to the [4Fe-4S] cluster binding site. Residues His40 and His76 each coordinate (2E)-4-hydroxy-3-methylbut-2-enyl diphosphate. 2 residues coordinate dimethylallyl diphosphate: His40 and His76. Isopentenyl diphosphate-binding residues include His40 and His76. Cys98 serves as a coordination point for [4Fe-4S] cluster. His126 is a (2E)-4-hydroxy-3-methylbut-2-enyl diphosphate binding site. Position 126 (His126) interacts with dimethylallyl diphosphate. His126 provides a ligand contact to isopentenyl diphosphate. The Proton donor role is filled by Glu128. Thr161 is a (2E)-4-hydroxy-3-methylbut-2-enyl diphosphate binding site. Cys191 lines the [4Fe-4S] cluster pocket. Positions 219, 220, 221, and 263 each coordinate (2E)-4-hydroxy-3-methylbut-2-enyl diphosphate. Ser219, Ser220, Asn221, and Ser263 together coordinate dimethylallyl diphosphate. Isopentenyl diphosphate contacts are provided by Ser219, Ser220, Asn221, and Ser263.

Belongs to the IspH family. The cofactor is [4Fe-4S] cluster.

The catalysed reaction is isopentenyl diphosphate + 2 oxidized [2Fe-2S]-[ferredoxin] + H2O = (2E)-4-hydroxy-3-methylbut-2-enyl diphosphate + 2 reduced [2Fe-2S]-[ferredoxin] + 2 H(+). It carries out the reaction dimethylallyl diphosphate + 2 oxidized [2Fe-2S]-[ferredoxin] + H2O = (2E)-4-hydroxy-3-methylbut-2-enyl diphosphate + 2 reduced [2Fe-2S]-[ferredoxin] + 2 H(+). It functions in the pathway isoprenoid biosynthesis; dimethylallyl diphosphate biosynthesis; dimethylallyl diphosphate from (2E)-4-hydroxy-3-methylbutenyl diphosphate: step 1/1. Its pathway is isoprenoid biosynthesis; isopentenyl diphosphate biosynthesis via DXP pathway; isopentenyl diphosphate from 1-deoxy-D-xylulose 5-phosphate: step 6/6. In terms of biological role, catalyzes the conversion of 1-hydroxy-2-methyl-2-(E)-butenyl 4-diphosphate (HMBPP) into a mixture of isopentenyl diphosphate (IPP) and dimethylallyl diphosphate (DMAPP). Acts in the terminal step of the DOXP/MEP pathway for isoprenoid precursor biosynthesis. This Petrotoga mobilis (strain DSM 10674 / SJ95) protein is 4-hydroxy-3-methylbut-2-enyl diphosphate reductase.